The following is a 316-amino-acid chain: Methionyl-tRNA formyltransferase (316 aa).

111–114 (GLLP) lines the (6S)-5,6,7,8-tetrahydrofolate pocket.

The protein belongs to the Fmt family.

The enzyme catalyses L-methionyl-tRNA(fMet) + (6R)-10-formyltetrahydrofolate = N-formyl-L-methionyl-tRNA(fMet) + (6S)-5,6,7,8-tetrahydrofolate + H(+). Its function is as follows. Attaches a formyl group to the free amino group of methionyl-tRNA(fMet). The formyl group appears to play a dual role in the initiator identity of N-formylmethionyl-tRNA by promoting its recognition by IF2 and preventing the misappropriation of this tRNA by the elongation apparatus. This is Methionyl-tRNA formyltransferase from Chlamydia trachomatis serovar A (strain ATCC VR-571B / DSM 19440 / HAR-13).